An 820-amino-acid polypeptide reads, in one-letter code: Scavenger receptor class F member 1 (820 aa).

Positions M1–G23 are cleaved as a signal peptide. The Extracellular segment spans residues S24–N422. EGF-like domains lie at T56–S90, W98–E133, R163–S193, and W217–E251. 12 cysteine pairs are disulfide-bonded: C60–C72, C66–C78, C80–C89, C102–C114, C108–C121, C123–C132, C166–C174, C168–C181, C183–C192, C221–C232, C225–C239, and C241–C250. An N-linked (GlcNAc...) asparagine glycan is attached at N291. EGF-like domains lie at F304–E341 and C353–N384. Residues A423–A443 traverse the membrane as a helical segment. Residues Y444–H820 are Cytoplasmic-facing. Disordered stretches follow at residues P549 to S685 and N715 to H820. Phosphoserine occurs at positions 590 and 607. A compositionally biased stretch (acidic residues) spans Q631–A648. Residues T650–G662 show a composition bias toward polar residues.

Heterophilic interaction with SREC2 via its extracellular domain. The heterophilic interaction is suppressed by the presence of ligand such as Ac-LDL. Interacts with AVIL; the interaction occurs in embryonic dorsal root ganglions at 18 dpc and induces neurite-like outgrowth. As to expression, expressed weakly in brain, spinal cord and dorsal root ganglions.

It is found in the membrane. Its function is as follows. Mediates the binding and degradation of acetylated low density lipoprotein (Ac-LDL). Mediates heterophilic interactions, suggesting a function as adhesion protein. Plays a role in the regulation of neurite-like outgrowth. The polypeptide is Scavenger receptor class F member 1 (Scarf1) (Mus musculus (Mouse)).